Consider the following 443-residue polypeptide: Thymidine phosphorylase (443 aa).

The protein belongs to the thymidine/pyrimidine-nucleoside phosphorylase family. Homodimer.

It carries out the reaction thymidine + phosphate = 2-deoxy-alpha-D-ribose 1-phosphate + thymine. The protein operates within pyrimidine metabolism; dTMP biosynthesis via salvage pathway; dTMP from thymine: step 1/2. The enzymes which catalyze the reversible phosphorolysis of pyrimidine nucleosides are involved in the degradation of these compounds and in their utilization as carbon and energy sources, or in the rescue of pyrimidine bases for nucleotide synthesis. This is Thymidine phosphorylase from Sodalis glossinidius (strain morsitans).